A 261-amino-acid polypeptide reads, in one-letter code: Indole-3-glycerol phosphate synthase (261 aa).

This sequence belongs to the TrpC family.

It catalyses the reaction 1-(2-carboxyphenylamino)-1-deoxy-D-ribulose 5-phosphate + H(+) = (1S,2R)-1-C-(indol-3-yl)glycerol 3-phosphate + CO2 + H2O. It functions in the pathway amino-acid biosynthesis; L-tryptophan biosynthesis; L-tryptophan from chorismate: step 4/5. In Oceanobacillus iheyensis (strain DSM 14371 / CIP 107618 / JCM 11309 / KCTC 3954 / HTE831), this protein is Indole-3-glycerol phosphate synthase.